A 460-amino-acid polypeptide reads, in one-letter code: Inactive ubiquitin carboxyl-terminal hydrolase MINDY-4B (460 aa).

A disordered region spans residues 41–76 (TNNSTPQNHEGNHTSADENEDGTGLSQPKGQGHLPS).

This sequence belongs to the MINDY deubiquitinase family. FAM188 subfamily.

The protein is Inactive ubiquitin carboxyl-terminal hydrolase MINDY-4B of Homo sapiens (Human).